The following is a 539-amino-acid chain: MRFDPEKIKKDAKENFDLTWNEGKKMVKTPTLNERYPRTTFRYGKAHPVYDTIQKLREAYLRMGFEEMMNPLIVDEKEVHKQFGSEALAVLDRCFYLAGLPRPNVGISDERIAQINGILGDIGDEGIDKVRKVLHAYKKGKVEGDDLVPEISAALEVSDALVADMIEKVFPEFKELVAQASTKTLRSHMTSGWFISLGALLERKEPPFHFFSIDRCFRREQQEDASRLMTYYSASCVIMDENVTVDHGKAVAEGLLSQFGFEKFLFRPDEKRSKYYVPDTQTEVFAFHPKLVGSNSKYSDGWIEIATFGIYSPTALAEYDIPCPVMNLGLGVERLAMILHDAPDIRSLTYPQIPQYSEWEMSDSELAKQVFVDKTPETPEGREIADAVVAQCELHGEEPSPCEFPAWEGEVCGRKVKVSVIEPEENTKLCGPAAFNEVVTYQGDILGIPNTKKWQKAFENHSAMAGIRFIEAFAAQAAREIEEAAMSGADEHIVRVRIVKVPSEVNIKIGATAQRYITGKNKKIDMRGPIFTSAKAEFE.

Substrate is bound by residues 188 to 190 (HMT), 233 to 235 (SAS), 275 to 276 (YY), and N327.

This sequence belongs to the class-II aminoacyl-tRNA synthetase family. O-phosphoseryl-tRNA(Cys) synthetase subfamily. Homotetramer. Interacts with SepCysS.

It carries out the reaction tRNA(Cys) + O-phospho-L-serine + ATP = O-phospho-L-seryl-tRNA(Cys) + AMP + diphosphate. In terms of biological role, catalyzes the attachment of O-phosphoserine (Sep) to tRNA(Cys). The chain is O-phosphoserine--tRNA(Cys) ligase from Methanosarcina acetivorans (strain ATCC 35395 / DSM 2834 / JCM 12185 / C2A).